A 189-amino-acid chain; its full sequence is MKFSTVGFLFSTILFKSAFAGWMDTHMKDEHHIDKYTDESFFRLHDLGKKGYWSDQDILSLYGLFENDEVPFVKKNEVLVDVLKKCDPSGNRRITLDEFLAFRKNGGELTDFGFPGHHGDEEEEFEMHHVEKYHPAGLDEPDENWNHPEDIEHFQKHDEIFHGDKKPEERRKHFVKYNNIPDKYRRVSI.

The signal sequence occupies residues 1-20; that stretch reads MKFSTVGFLFSTILFKSAFA. Positions 74 to 109 constitute an EF-hand domain; that stretch reads KKNEVLVDVLKKCDPSGNRRITLDEFLAFRKNGGEL. Ca(2+) contacts are provided by Asp87, Ser89, Asn91, Arg93, and Glu98.

Its subcellular location is the endoplasmic reticulum lumen. The protein resides in the golgi apparatus lumen. This is an uncharacterized protein from Schizosaccharomyces pombe (strain 972 / ATCC 24843) (Fission yeast).